Consider the following 289-residue polypeptide: Oxaloacetate decarboxylase (289 aa).

Serine 47 is a binding site for substrate. Residue aspartate 85 participates in Mg(2+) binding. Substrate is bound by residues arginine 156 and histidine 232.

Belongs to the isocitrate lyase/PEP mutase superfamily. Oxaloacetate decarboxylase family. Homotetramer; dimer of dimers. Mg(2+) serves as cofactor.

The catalysed reaction is oxaloacetate + H(+) = pyruvate + CO2. Catalyzes the decarboxylation of oxaloacetate into pyruvate. Seems to play a role in maintaining cellular concentrations of bicarbonate and pyruvate. The protein is Oxaloacetate decarboxylase of Rhodopseudomonas palustris (strain BisB5).